Reading from the N-terminus, the 395-residue chain is Zinc finger protein HD1 (395 aa).

A B box-type 1; atypical zinc finger spans residues 30–72; the sequence is PWARPCDGCRAAPSVVYCRADAAYLCASCDARVHAANRVASRH. Zn(2+) is bound by residues Cys35, Cys38, Cys58, His63, Cys78, Cys81, Cys101, and His106. A B box-type 2; atypical zinc finger spans residues 73–117; the sequence is ERVRVCEACERAPAALACRADAAALCVACDVQVHSANPLPAITIP. 2 disordered regions span residues 147–176 and 208–228; these read SKDS…SNNG and GMHE…EFAE. Over residues 152 to 175 the composition is skewed to low complexity; that stretch reads NNNNNNNNNDNDNNDNNNSNSSNN. A CCT domain is found at 326–368; that stretch reads REARVLRYREKKKARKFEKTIRYETRKAYAEARPRIKGRFAKR.

This sequence belongs to the CONSTANS family. As to quaternary structure, interacts with HAL3 in the dark. Phosphorylated by OSK4 in the presence of HDR1.

It localises to the nucleus. Its function is as follows. Probable transcription factor involved in the regulation of flower development. Required for the promotion of flowering under short day (SD) conditions and the suppression of flowering under long day (LD) conditions. Positively regulates the floral activator HEADING DATE 3a (HD3A) under SD and negatively under LD conditions. The chain is Zinc finger protein HD1 from Oryza sativa subsp. japonica (Rice).